A 226-amino-acid chain; its full sequence is 6-carboxyhexanoate--CoA ligase (226 aa).

It belongs to the BioW family. In terms of assembly, homodimer. Mg(2+) is required as a cofactor.

It catalyses the reaction heptanedioate + ATP + CoA = 6-carboxyhexanoyl-CoA + AMP + diphosphate. The protein operates within metabolic intermediate metabolism; pimeloyl-CoA biosynthesis; pimeloyl-CoA from pimelate: step 1/1. Functionally, catalyzes the transformation of pimelate into pimeloyl-CoA with concomitant hydrolysis of ATP to AMP. The protein is 6-carboxyhexanoate--CoA ligase of Methanocaldococcus infernus (strain DSM 11812 / JCM 15783 / ME).